A 512-amino-acid polypeptide reads, in one-letter code: MEEVQEYLKKDRSPQQHFLYPLLLQEYIYTLAHDDSLNGSIFYEPIEFIGYDNKFSLVLVKRLIIRMYQQNFLIYLVNDSNQNRFGGHSNYFYSHFFYSQMVSKGFSVIVEIPFSLRLVSSSEEKEIPKSQNLGSIHSIFPFLEDKLSHLNNVSDILIPHPIHFEILVQILQCWIQDVPSLHLLRFFLHKYQNLNKTIQSNKTIYVFSKENKRLFWFLYNSYVSECEFLLVFFHKQSCYLRSTSSGAFLERSHFYGKMEHIIIVCCNNFQKTLWPVKDPLIHYVRYQGKAILASRGTHLLMKKWRYYFVNFWQYYFHFWSQPYRMHINSLLNYSFYFMGYLLGVLINPYAVKNQMLENSFLIDTVINKFDTIIPIIPLIGSLSKAKFCTFSGHPISKPIWADLLDFDIIDRFGRICRNLSHYHSGSSKKQSLYRIKYILRLSGGXXLARKHKSTXVPLLQRLGSGLLEEFFTEEXQVLSFFFPKTTLFTLHGSHRERIWSLDIIRINDLVNN.

Belongs to the intron maturase 2 family. MatK subfamily.

It is found in the plastid. It localises to the chloroplast. Usually encoded in the trnK tRNA gene intron. Probably assists in splicing its own and other chloroplast group II introns. The polypeptide is Maturase K (Lilium regale (Regal lily)).